A 179-amino-acid chain; its full sequence is Translation initiation factor IF-3 (179 aa).

This sequence belongs to the IF-3 family. In terms of assembly, monomer.

It localises to the cytoplasm. Functionally, IF-3 binds to the 30S ribosomal subunit and shifts the equilibrium between 70S ribosomes and their 50S and 30S subunits in favor of the free subunits, thus enhancing the availability of 30S subunits on which protein synthesis initiation begins. The polypeptide is Translation initiation factor IF-3 (Buchnera aphidicola subsp. Acyrthosiphon pisum (strain 5A)).